Reading from the N-terminus, the 892-residue chain is Protein argonaute 11 (892 aa).

A compositionally biased stretch (gly residues) spans 1-17 (MSSRGGGVGGRRGGPGG). Disordered regions lie at residues 1-68 (MSSR…ALQP) and 86-117 (MEAR…GALP). Over residues 86-107 (MEAREGASSSSSASAPAVGEVE) the composition is skewed to low complexity. The region spanning 248-362 (SLKQFLAGTY…LPMEVCRIVK (115 aa)) is the PAZ domain. Residues 541-848 (LLVIVLPDAN…AASRARHYLE (308 aa)) enclose the Piwi domain. Residues 850 to 876 (GSLPDHGSSSASAAGGSRRNDRGVPVK) form a disordered region. Positions 856 to 866 (GSSSASAAGGS) are enriched in low complexity. Residues 867–876 (RRNDRGVPVK) are compositionally biased toward basic and acidic residues.

Belongs to the argonaute family. Ago subfamily.

Its function is as follows. Probably involved in the RNA silencing pathway. May bind to short RNAs such as microRNAs (miRNAs) or short interfering RNAs (siRNAs), and represses the translation of mRNAs which are complementary to them. The protein is Protein argonaute 11 (AGO11) of Oryza sativa subsp. japonica (Rice).